Reading from the N-terminus, the 233-residue chain is Zinc import ATP-binding protein ZnuC (233 aa).

The ABC transporter domain occupies isoleucine 6–leucine 222. ATP is bound at residue glycine 38–threonine 45.

It belongs to the ABC transporter superfamily. Zinc importer (TC 3.A.1.15.5) family. As to quaternary structure, the complex is composed of two ATP-binding proteins (ZnuC), two transmembrane proteins (ZnuB) and a solute-binding protein (ZnuA).

It is found in the cell inner membrane. The catalysed reaction is Zn(2+)(out) + ATP(in) + H2O(in) = Zn(2+)(in) + ADP(in) + phosphate(in) + H(+)(in). Part of the ABC transporter complex ZnuABC involved in zinc import. Responsible for energy coupling to the transport system. This is Zinc import ATP-binding protein ZnuC from Rickettsia bellii (strain RML369-C).